The sequence spans 156 residues: Small ribosomal subunit protein uS7 (156 aa).

This sequence belongs to the universal ribosomal protein uS7 family. As to quaternary structure, part of the 30S ribosomal subunit. Contacts proteins S9 and S11.

One of the primary rRNA binding proteins, it binds directly to 16S rRNA where it nucleates assembly of the head domain of the 30S subunit. Is located at the subunit interface close to the decoding center, probably blocks exit of the E-site tRNA. In Myxococcus xanthus (strain DK1622), this protein is Small ribosomal subunit protein uS7.